Consider the following 231-residue polypeptide: (S)-2-haloacid dehalogenase 4A (231 aa).

The active-site Nucleophile is Asp-11. Residues 12-13 (AY), Arg-42, and 119-120 (SN) contribute to the an (S)-2-haloacid site. The important for catalytic activity stretch occupies residues 176–181 (SSNAWD).

It belongs to the HAD-like hydrolase superfamily. S-2-haloalkanoic acid dehalogenase family.

It carries out the reaction an (S)-2-haloacid + H2O = a (2R)-2-hydroxycarboxylate + a halide anion + H(+). The enzyme catalyses (S)-2-chloropropanoate + H2O = (R)-lactate + chloride + H(+). Its function is as follows. Catalyzes the hydrolytic dehalogenation of small (S)-2-haloalkanoic acids to yield the corresponding (R)-2-hydroxyalkanoic acids. Acts on acids of short chain lengths, C(2) to C(4), with inversion of configuration at C-3. Active with 2-halogenated carboxylic acids and converts only the S-isomer (or L-isomer) of 2-chloropropionic acid with inversion of configuration to produce R-lactate (or D-isomer). In Burkholderia cepacia (Pseudomonas cepacia), this protein is (S)-2-haloacid dehalogenase 4A.